We begin with the raw amino-acid sequence, 204 residues long: Ribonuclease HII (204 aa).

The RNase H type-2 domain maps to 13 to 204; it reads GPVAGCDEAG…VRRAARLHSS (192 aa). 3 residues coordinate a divalent metal cation: D19, E20, and D113.

It belongs to the RNase HII family. The cofactor is Mn(2+). It depends on Mg(2+) as a cofactor.

It is found in the cytoplasm. It carries out the reaction Endonucleolytic cleavage to 5'-phosphomonoester.. Endonuclease that specifically degrades the RNA of RNA-DNA hybrids. This chain is Ribonuclease HII, found in Cutibacterium acnes (strain DSM 16379 / KPA171202) (Propionibacterium acnes).